An 84-amino-acid chain; its full sequence is Toxin Acra3 (84 aa).

The first 17 residues, 1-17, serve as a signal peptide directing secretion; sequence MKIIFLVLMMILSEVYS. An LCN-type CS-alpha/beta domain is found at 19–82; the sequence is RDGYPVHDGT…VYGDDGIFCK (64 aa). 4 cysteine pairs are disulfide-bonded: cysteine 30-cysteine 81, cysteine 34-cysteine 57, cysteine 43-cysteine 62, and cysteine 47-cysteine 64. Position 83 is a serine amide (serine 83).

It belongs to the long (4 C-C) scorpion toxin superfamily. Sodium channel inhibitor family. Beta subfamily. As to expression, expressed by the venom gland.

The protein localises to the secreted. Functionally, toxin with unknown target. In vivo, induces severe neurotoxic events in mice such as excitability and convulsions, leading to the death of the animals within a few minutes after injection. Exerts very strong cytotoxic effect on a mouse brain tumor cell line (BC3H1) (IC(50)=5 mg/ml). It exerts its effects by inducing a stronger necrosis than apoptosis in BC3H1 cells. This chain is Toxin Acra3, found in Androctonus crassicauda (Arabian fat-tailed scorpion).